The sequence spans 378 residues: Odorant receptor Or2 (378 aa).

Residue methionine 1 is a topological domain, cytoplasmic. Residues 2-22 (LIEECPIIGVNVRVWLFWSYL) form a helical membrane-spanning segment. The Extracellular portion of the chain corresponds to 23-29 (RRPRLSR). A helical transmembrane segment spans residues 30-50 (FLVGCIPVAVLNVFQFLKLYS). Over 51-59 (SWGDMSELI) the chain is Cytoplasmic. Residues 60–80 (INGYFTVLYFNLVLRTSFLVI) form a helical membrane-spanning segment. At 81-120 (NRRKFETFFEGVAAEYALLEKNDDIRPVLERYTRRGRMLS) the chain is on the extracellular side. Residues 121 to 141 (ISNLWLGAFISACFVTYPLFV) form a helical membrane-spanning segment. The Cytoplasmic portion of the chain corresponds to 142-164 (PGRGLPYGVTIPGVDVLATPTYQ). A helical membrane pass occupies residues 165–185 (VVFVLQVYLTFPACCMYIPFT). Residues 186–254 (SFYATCTLFA…HDLNSLVTHL (69 aa)) are Extracellular-facing. A helical membrane pass occupies residues 255 to 275 (CLLEFLSFGMMLCALLFLLSI). At 276-278 (SNQ) the chain is on the cytoplasmic side. The chain crosses the membrane as a helical span at residues 279-299 (LAQMIMIGSYIFMILSQMFAF). Residues 300–378 (YWHANEVLEQ…YFTLLRRVYN (79 aa)) lie on the Extracellular side of the membrane. Asparagine 364 carries an N-linked (GlcNAc...) asparagine glycan.

This sequence belongs to the insect chemoreceptor superfamily. Heteromeric odorant receptor channel (TC 1.A.69) family. Or30a subfamily. In terms of tissue distribution, expressed in male and female antennae and maxillary palps.

It is found in the cell membrane. Functionally, odorant receptor which plays a critical role in the anthropophilic host-seeking behavior; establishes the host preference to transmit malaria. The chain is Odorant receptor Or2 (OR2) from Anopheles gambiae (African malaria mosquito).